We begin with the raw amino-acid sequence, 245 residues long: Carboxy-S-adenosyl-L-methionine synthase (245 aa).

S-adenosyl-L-methionine contacts are provided by residues Tyr-42, 67–69, 92–93, 120–121, Asn-135, and Arg-202; these read GCS, DN, and DI.

It belongs to the class I-like SAM-binding methyltransferase superfamily. Cx-SAM synthase family. Homodimer.

It catalyses the reaction prephenate + S-adenosyl-L-methionine = carboxy-S-adenosyl-L-methionine + 3-phenylpyruvate + H2O. Its function is as follows. Catalyzes the conversion of S-adenosyl-L-methionine (SAM) to carboxy-S-adenosyl-L-methionine (Cx-SAM). The protein is Carboxy-S-adenosyl-L-methionine synthase of Vibrio vulnificus (strain YJ016).